The primary structure comprises 219 residues: Small ribosomal subunit protein uS3c (219 aa).

The KH type-2 domain occupies 43 to 118 (IKNYVQNNMI…KLNITITRIE (76 aa)).

It belongs to the universal ribosomal protein uS3 family. Part of the 30S ribosomal subunit.

It is found in the plastid. The protein is Small ribosomal subunit protein uS3c (rps3) of Cuscuta exaltata (Tall dodder).